The following is a 253-amino-acid chain: Hydroxyacylglutathione hydrolase (253 aa).

Positions 59, 61, 63, 64, 118, 143, and 181 each coordinate Zn(2+).

This sequence belongs to the metallo-beta-lactamase superfamily. Glyoxalase II family. Monomer. The cofactor is Zn(2+).

The enzyme catalyses an S-(2-hydroxyacyl)glutathione + H2O = a 2-hydroxy carboxylate + glutathione + H(+). Its pathway is secondary metabolite metabolism; methylglyoxal degradation; (R)-lactate from methylglyoxal: step 2/2. Thiolesterase that catalyzes the hydrolysis of S-D-lactoyl-glutathione to form glutathione and D-lactic acid. The chain is Hydroxyacylglutathione hydrolase from Prochlorococcus marinus (strain SARG / CCMP1375 / SS120).